The chain runs to 207 residues: M-zodatoxin-Lt4a (207 aa).

The signal sequence occupies residues 1–22 (MKFSIIALALAVAFVCVAESRS). Residues 23-43 (EEEGYDVSEEIQAEELEEAER) constitute a propeptide that is removed on maturation. Residues 40–43 (EAER) carry the Processing quadruplet motif 1 motif. Gln-61 carries the glutamine amide modification. The Inverted processing quadruplet motif 1 signature appears at 63–66 (REDS). The propeptide occupies 63–71 (REDSEEAGR). A Processing quadruplet motif 2 motif is present at residues 68-71 (EAGR). Gln-89 bears the Glutamine amide mark. An Inverted processing quadruplet motif 2 motif is present at residues 91–94 (REDS). A propeptide spanning residues 91 to 99 (REDSEEAGR) is cleaved from the precursor. The Processing quadruplet motif 3 motif lies at 96–99 (EAGR). The residue at position 117 (Gln-117) is a Glutamine amide. Residues 119–122 (REDS) carry the Inverted processing quadruplet motif 3 motif. A propeptide spanning residues 119-127 (REDSEEAGR) is cleaved from the precursor. The Processing quadruplet motif 4 motif lies at 124–127 (EAGR). Gln-145 carries the glutamine amide modification. Residues 147-150 (REDS) carry the Inverted processing quadruplet motif 4 motif. The propeptide occupies 147 to 155 (REDSEEAGR). The Processing quadruplet motif 5 signature appears at 152 to 155 (EAGR). The residue at position 173 (Gln-173) is a Glutamine amide. The Inverted processing quadruplet motif 5 signature appears at 175–178 (REDT). Residues 175–182 (REDTEEAR) constitute a propeptide that is removed on maturation. The short motif at 179-182 (EEAR) is the Processing quadruplet motif 6 element. A Phenylalanine amide modification is found at Phe-206.

Belongs to the cationic peptide 03 (latarcin) family. 04 subfamily. Post-translationally, cleavage of the propeptide depends on the processing quadruplet motif (PQM) (XXXR, with at least one of X being E) and the inverted PQM (RXXX, with at least one of X being E). As to expression, expressed by the venom gland.

The protein resides in the secreted. In terms of biological role, M-zodatoxin-Lt4a: Has antimicrobial activity against Gram-positive bacteria (A.globiformis VKM Ac-1112 (MIC=0.3 uM), and B.subtilis VKM B-501 (MIC=1.1 uM)), Gram-negative bacteria (E.coli DH5-alpha (MIC=4.5 uM), E.coli MH1 (MIC=3.2 uM), and P.aeruginosa PAO1 (MIC&gt;35 uM)), and yeasts (P.pastoris GS115 (MIC=36 uM), and S.cerevisiae Y190 (MIC=18 uM)). Does not have hemolytic activity against rabbit erythrocytes. Causes paralysis, but is not lethal when injected into insect (M.domestica) larvae. Functionally, shows no antimicrobial activity against Gram-positive bacterium B.subtilis B-501 or Gram-negative bacterium E.coli DH5-alpha at concentrations up to 20 uM. Its function is as follows. Shows no antimicrobial activity against Gram-positive bacterium B.subtilis B-501 or Gram-negative bacterium E.coli DH5-alpha at concentrations up to 20 uM. Shows no toxicity towards insect (S.carnaria) larvae. This chain is M-zodatoxin-Lt4a, found in Lachesana tarabaevi (Spider).